Here is a 607-residue protein sequence, read N- to C-terminus: Aspartate--tRNA(Asp/Asn) ligase (607 aa).

Residue glutamate 173 coordinates L-aspartate. The tract at residues 197-200 (QLFK) is aspartate. Arginine 219 contacts L-aspartate. Residues 219-221 (RDE) and glutamine 228 each bind ATP. L-aspartate is bound at residue histidine 456. Glutamate 498 is a binding site for ATP. Residue arginine 505 participates in L-aspartate binding. ATP is bound at residue 550 to 553 (GLDR).

It belongs to the class-II aminoacyl-tRNA synthetase family. Type 1 subfamily. As to quaternary structure, homodimer.

It localises to the cytoplasm. The catalysed reaction is tRNA(Asx) + L-aspartate + ATP = L-aspartyl-tRNA(Asx) + AMP + diphosphate. Functionally, aspartyl-tRNA synthetase with relaxed tRNA specificity since it is able to aspartylate not only its cognate tRNA(Asp) but also tRNA(Asn). Reaction proceeds in two steps: L-aspartate is first activated by ATP to form Asp-AMP and then transferred to the acceptor end of tRNA(Asp/Asn). The protein is Aspartate--tRNA(Asp/Asn) ligase of Magnetococcus marinus (strain ATCC BAA-1437 / JCM 17883 / MC-1).